Reading from the N-terminus, the 464-residue chain is Argininosuccinate lyase (464 aa).

Alanine 2 bears the N-acetylalanine mark. Lysine 7 is subject to N6-acetyllysine. Serine 27 lines the 2-(N(omega)-L-arginino)succinate pocket. Residue lysine 69 is modified to N6-acetyllysine. Residues asparagine 114 and threonine 159 each coordinate 2-(N(omega)-L-arginino)succinate. Histidine 160 (proton acceptor) is an active-site residue. Serine 281 (proton donor) is an active-site residue. An N6-acetyllysine modification is found at lysine 288. 2-(N(omega)-L-arginino)succinate is bound by residues asparagine 289, tyrosine 321, glutamine 326, and lysine 329.

The protein belongs to the lyase 1 family. Argininosuccinate lyase subfamily. As to quaternary structure, homotetramer. Forms tissue-specific complexes with ASS1, SLC7A1, HSP90AA1 and nitric oxide synthase NOS1, NOS2 or NOS3; the complex maintenance is independent of ASL catalytic function. In terms of processing, acetylation modifies enzyme activity in response to alterations of extracellular nutrient availability. Acetylation increased with trichostin A (TSA) or with nicotinamide (NAM). Glucose increases acetylation by about a factor of 3 with decreasing enzyme activity. Acetylation on Lys-288 is decreased on the addition of extra amino acids resulting in activation of enzyme activity. As to expression, expressed in lung and brain (at protein level).

The catalysed reaction is 2-(N(omega)-L-arginino)succinate = fumarate + L-arginine. The protein operates within amino-acid biosynthesis; L-arginine biosynthesis; L-arginine from L-ornithine and carbamoyl phosphate: step 3/3. It functions in the pathway nitrogen metabolism; urea cycle; L-arginine and fumarate from (N(omega)-L-arginino)succinate: step 1/1. Enzyme activity is regulated by acetylation. Functionally, catalyzes the reversible cleavage of L-argininosuccinate to fumarate and L-arginine, an intermediate step reaction in the urea cycle mostly providing for hepatic nitrogen detoxification into excretable urea as well as de novo L-arginine synthesis in nonhepatic tissues. Essential regulator of intracellular and extracellular L-arginine pools. As part of citrulline-nitric oxide cycle, forms tissue-specific multiprotein complexes with argininosuccinate synthase ASS1, transport protein SLC7A1 and nitric oxide synthase NOS1, NOS2 or NOS3, allowing for cell-autonomous L-arginine synthesis while channeling extracellular L-arginine to nitric oxide synthesis pathway. This Mus musculus (Mouse) protein is Argininosuccinate lyase (Asl).